The sequence spans 2289 residues: Protein Ycf2 (2289 aa).

1643 to 1650 (GSIGTGRS) contacts ATP.

This sequence belongs to the Ycf2 family.

It localises to the plastid. It is found in the chloroplast stroma. Probable ATPase of unknown function. Its presence in a non-photosynthetic plant (Epifagus virginiana) and experiments in tobacco indicate that it has an essential function which is probably not related to photosynthesis. This chain is Protein Ycf2, found in Capsella bursa-pastoris (Shepherd's purse).